A 204-amino-acid chain; its full sequence is MGAYRYMQELWRKKQSDVMRFLLRVRCWQYRQLSNLHRAPRPTRPDKARRLGYKAKQGYVVYRVRVRRGGRKRPVPKGATYGKPVHHGVNQIKFARSLQSTAEERAGRHCGALRVLNSYWVGEDSTYKFFEVILIDPFHKAVRRNPDTQWITKAVHKHREMRGLTSAGKKSRGLGKGHKFHLTIGGSRRAAWKRRNTLQLRRYR.

The protein belongs to the eukaryotic ribosomal protein eL15 family. In terms of assembly, component of the large ribosomal subunit.

The protein localises to the cytoplasm. Component of the large ribosomal subunit. The ribosome is a large ribonucleoprotein complex responsible for the synthesis of proteins in the cell. The sequence is that of Large ribosomal subunit protein eL15 (rpl15) from Siniperca knerii (Big-eye mandarin fish).